The sequence spans 369 residues: Small ribosomal subunit biogenesis GTPase RsgA (369 aa).

Positions 116–271 constitute a CP-type G domain; it reads GEQLIAANLD…LIDNPGIREI (156 aa). Residues 161–164 and 213–221 contribute to the GTP site; these read NKID and GSSGVGKST. Zn(2+)-binding residues include C294, C299, H301, and C307.

This sequence belongs to the TRAFAC class YlqF/YawG GTPase family. RsgA subfamily. In terms of assembly, monomer. Associates with 30S ribosomal subunit, binds 16S rRNA. Zn(2+) is required as a cofactor.

It is found in the cytoplasm. Its function is as follows. One of several proteins that assist in the late maturation steps of the functional core of the 30S ribosomal subunit. Helps release RbfA from mature subunits. May play a role in the assembly of ribosomal proteins into the subunit. Circularly permuted GTPase that catalyzes slow GTP hydrolysis, GTPase activity is stimulated by the 30S ribosomal subunit. The sequence is that of Small ribosomal subunit biogenesis GTPase RsgA from Methanosarcina acetivorans (strain ATCC 35395 / DSM 2834 / JCM 12185 / C2A).